Here is a 362-residue protein sequence, read N- to C-terminus: Histidinol-phosphate aminotransferase (362 aa).

N6-(pyridoxal phosphate)lysine is present on lysine 210.

This sequence belongs to the class-II pyridoxal-phosphate-dependent aminotransferase family. Histidinol-phosphate aminotransferase subfamily. In terms of assembly, homodimer. It depends on pyridoxal 5'-phosphate as a cofactor.

It catalyses the reaction L-histidinol phosphate + 2-oxoglutarate = 3-(imidazol-4-yl)-2-oxopropyl phosphate + L-glutamate. Its pathway is amino-acid biosynthesis; L-histidine biosynthesis; L-histidine from 5-phospho-alpha-D-ribose 1-diphosphate: step 7/9. This is Histidinol-phosphate aminotransferase from Rhodopirellula baltica (strain DSM 10527 / NCIMB 13988 / SH1).